A 426-amino-acid chain; its full sequence is Kynureninase (426 aa).

Pyridoxal 5'-phosphate is bound by residues Leu-110, Ser-111, 138-141 (FPSD), Asp-223, His-226, and Tyr-248. Lys-249 is subject to N6-(pyridoxal phosphate)lysine. The pyridoxal 5'-phosphate site is built by Trp-279 and Asn-307.

Belongs to the kynureninase family. In terms of assembly, homodimer. It depends on pyridoxal 5'-phosphate as a cofactor.

It carries out the reaction L-kynurenine + H2O = anthranilate + L-alanine + H(+). The enzyme catalyses 3-hydroxy-L-kynurenine + H2O = 3-hydroxyanthranilate + L-alanine + H(+). It functions in the pathway amino-acid degradation; L-kynurenine degradation; L-alanine and anthranilate from L-kynurenine: step 1/1. It participates in cofactor biosynthesis; NAD(+) biosynthesis; quinolinate from L-kynurenine: step 2/3. Catalyzes the cleavage of L-kynurenine (L-Kyn) and L-3-hydroxykynurenine (L-3OHKyn) into anthranilic acid (AA) and 3-hydroxyanthranilic acid (3-OHAA), respectively. This is Kynureninase from Myxococcus xanthus (strain DK1622).